Reading from the N-terminus, the 43-residue chain is Protein PsbN (43 aa).

A helical membrane pass occupies residues 5-27 (TLVAIFISCLLVSFTGYAPYTAS).

It belongs to the PsbN family.

Its subcellular location is the plastid. It localises to the chloroplast thylakoid membrane. Its function is as follows. May play a role in photosystem I and II biogenesis. This Anthoceros angustus (Hornwort) protein is Protein PsbN.